A 482-amino-acid polypeptide reads, in one-letter code: MDSFGQPRPEDNQSVVRRMQKKYWKTKQVFIKATGKKEDEHLVASDAELDAKLEVFHSVQETCTELLKIIEKYQLRLNVISEEENELGLFLKFQAERDATQAGKMMDATGKALCSSAKQRLALCTPLSRLKQEVATFSQRAVSDTLMTINRMEQARTEYRGALLWMKDVSQELDPDTLKQMEKFRKVQMQVRNSKASFDKLKMDVCQKVDLLGASRCNMLSHSLTTYQRTLLGFWKKTARMMSQIHEACIGFHPYDFVALKQLQDTPSKISEDNKDEQIGGFLTEQLNKLVLSDEEASFESEQANKDHNEKHSQMREFGAPQFSNSENVAKDLPVDSLEGEDFEKEFSFLNNLLSSGSSSTSEFTQECQTAFGSPSASLTSQEPSMGSEPLAHSSRFLPSQLFDLGFHVAGAFNNWVSQEESELCLSHTDNQPVPSQSPKKLTRSPNNGNQDMSAWFNLFADLDPLSNPDAIGHSDDELLNA.

One can recognise an AH domain in the interval 44 to 247 (ASDAELDAKL…TARMMSQIHE (204 aa)). 2 disordered regions span residues 365–393 (TQEC…PLAH) and 427–449 (SHTD…PNNG). Polar residues-rich tracts occupy residues 366–385 (QECQ…QEPS) and 428–449 (HTDN…PNNG).

This chain is Islet cell autoantigen 1-like protein (ICA1L), found in Homo sapiens (Human).